The following is a 416-amino-acid chain: L-lysine 2,3-aminomutase (416 aa).

The Radical SAM core domain maps to 111–322 (HRYPDRVLLL…EGLRGHTSGY (212 aa)). [4Fe-4S] cluster contacts are provided by Cys125, Cys129, and Cys132. Residue Cys268 coordinates Zn(2+). Lys337 carries the N6-(pyridoxal phosphate)lysine modification. Residues Cys375, Cys377, and Cys380 each contribute to the Zn(2+) site.

The protein belongs to the radical SAM superfamily. KamA family. As to quaternary structure, homohexamer; trimer of dimers. Forms a homotetramer in crystal. [4Fe-4S] cluster is required as a cofactor. It depends on pyridoxal 5'-phosphate as a cofactor. Requires Co(2+) as cofactor. The cofactor is Zn(2+).

The enzyme catalyses L-lysine = (3S)-3,6-diaminohexanoate. Its pathway is amino-acid degradation; L-lysine degradation via acetate pathway. The enzyme is activated by S-adenosyl-methionine. Activity is dependent on the levels of Fe(2+), S(2-) and Co(2+). Activity is stimulated by addition of EDTA. S-adenosylhomocysteine competitively inhibits the activity whereas 5'-methylthioadenosine is not inhibitory in the presence of S-adenosylmethionine. Competitively inhibited by 4-thialysine. Inhibited by sodium borohydride (1 mM) when added with 2 mM dithionate. Moderately inhibited by beta-mercaptoethanol (30 mM) along with dithionate. Higher concentrations of Fe(2+) partially inhibit the activity and Co(2+) at 1 mM is a strong inhibitor. Hydroxylamine, isonicotinic acid hydrazide inhibit effectively, in addition, hydrazine, D-penicillamine and D-cycloserine are also inhibitory at high concentrations. Functionally, catalyzes the interconversion of L-alpha-lysine and L-beta-lysine. The protein is L-lysine 2,3-aminomutase (kamA) of Clostridium subterminale.